The primary structure comprises 148 residues: HTH-type transcriptional regulator SarZ (148 aa).

One can recognise an HTH marR-type domain in the interval 9-139; the sequence is SKQLCFLFYV…IINNLRNFVS (131 aa). A DNA-binding region (H-T-H motif) is located at residues 55–78; it reads IKKLGERVFLDSGTLTPLLKKLEK.

Belongs to the SarZ family.

The protein localises to the cytoplasm. Its function is as follows. Activates transcription of virulence factors alpha- and beta hemolysin genes (hla and hlb). Also, activates RNAIII expression, a central regulator transcribed from the agr locus. The sequence is that of HTH-type transcriptional regulator SarZ (sarZ) from Staphylococcus aureus (strain USA300).